Consider the following 384-residue polypeptide: MDNSMKNIFRQGRLFIALSLAMTSISAFALTQQEVDDIIKPLMKQEQIPGMSVAISVNGKQAIYHYGVQSKQTQIPVSDRTLYEIGSLSKTFTATLATYAQIQGKLDFSQSVSHYLPELKGSAFDNVSVMNLATHTSGLSLFVPSDIKTNDQLMAYYQKWLPDNEVGQYRSYSNLGVGLLGIVTAKQLNMPFSQAMEKLMLPSLGLKHTYIHVPKSQEKYYAQGYNKQNQPVRLNLEILGPEAYGLKSNAKDLIRYLEINMQSIKVAKTWQEAIENTHTGVYLTDSFVQDMMWESYPWPVSLSQLLQGNRDDMALKPQKVELIKPAMAPEVRAYYNKTGSSNGFATYAIFIPEEKIAIVMLSNKWIPIPQRITATYQLLEKIER.

The first 29 residues, 1-29, serve as a signal peptide directing secretion; sequence MDNSMKNIFRQGRLFIALSLAMTSISAFA. Ser-87 (acyl-ester intermediate) is an active-site residue. The Proton acceptor role is filled by Tyr-172. 337 to 339 contributes to the substrate binding site; the sequence is KTG.

It belongs to the class-C beta-lactamase family.

The protein resides in the periplasm. It carries out the reaction a beta-lactam + H2O = a substituted beta-amino acid. Functionally, this protein is a serine beta-lactamase with a substrate specificity for cephalosporins. This is Beta-lactamase (ampC) from Providencia stuartii.